The following is a 102-amino-acid chain: Putative defensin-like protein 298 (102 aa).

An N-terminal signal peptide occupies residues 1 to 29 (MSASKATMLILFALFLSDILLVSIPRAEA). 6 cysteine pairs are disulfide-bonded: Cys35-Cys53, Cys41-Cys58, Cys46-Cys60, Cys74-Cys93, Cys80-Cys98, and Cys86-Cys100.

This sequence belongs to the DEFL family.

It is found in the secreted. The protein is Putative defensin-like protein 298 of Arabidopsis thaliana (Mouse-ear cress).